We begin with the raw amino-acid sequence, 430 residues long: Glutamyl-tRNA reductase (430 aa).

Substrate is bound by residues 50–53 (TCNR), serine 108, 113–115 (EPQ), and glutamine 119. The active-site Nucleophile is the cysteine 51. Residue 188–193 (GAGEMA) coordinates NADP(+).

Belongs to the glutamyl-tRNA reductase family. Homodimer.

It catalyses the reaction (S)-4-amino-5-oxopentanoate + tRNA(Glu) + NADP(+) = L-glutamyl-tRNA(Glu) + NADPH + H(+). Its pathway is porphyrin-containing compound metabolism; protoporphyrin-IX biosynthesis; 5-aminolevulinate from L-glutamyl-tRNA(Glu): step 1/2. Functionally, catalyzes the NADPH-dependent reduction of glutamyl-tRNA(Glu) to glutamate 1-semialdehyde (GSA). The protein is Glutamyl-tRNA reductase of Desulfovibrio desulfuricans (strain ATCC 27774 / DSM 6949 / MB).